A 154-amino-acid polypeptide reads, in one-letter code: Leghemoglobin-1 (154 aa).

The Globin domain occupies 3 to 151 (VLTDVQVALV…LAIIIKKEMK (149 aa)). Ser46 lines the heme b pocket. Ser46 carries the post-translational modification Phosphoserine. His64 serves as a coordination point for O2. Lys67, His98, and Lys101 together coordinate heme b. Nitrated tyrosine is present on Tyr139.

The protein belongs to the plant globin family. As to quaternary structure, monomer. In terms of processing, nitrated in effective nodules and particularly in hypoxic conditions; this mechanism may play a protective role in the symbiosis by buffering toxic peroxynitrite NO(2)(-). Nitration level decrease during nodule senescence. Post-translationally, phosphorylation at Ser-46 disrupts the molecular environment of its porphyrin ring oxygen binding pocket, thus leading to a reduced oxygen consumption and to the delivery of oxygen O(2) to symbiosomes. In terms of tissue distribution, accumulates in developing root nodules and present in roots, especially in the upper part. Detected in leaves at low levels.

The protein localises to the cytoplasm. The protein resides in the cytosol. It is found in the nucleus. Functionally, leghemoglobin that reversibly binds oxygen O(2) through a pentacoordinated heme iron. In root nodules, facilitates the diffusion of oxygen to the bacteroids while preventing the bacterial nitrogenase from being inactivated by buffering dioxygen, nitric oxide and carbon monoxide, and promoting the formation of reactive oxygen species (ROS, e.g. H(2)O(2)). This role is essential for symbiotic nitrogen fixation (SNF). The polypeptide is Leghemoglobin-1 (Lupinus luteus (European yellow lupine)).